We begin with the raw amino-acid sequence, 415 residues long: Imidazolonepropionase (415 aa).

Residues H76 and H78 each coordinate Fe(3+). H76 and H78 together coordinate Zn(2+). Residues R85, Y148, and H181 each coordinate 4-imidazolone-5-propanoate. Y148 contacts N-formimidoyl-L-glutamate. H246 contributes to the Fe(3+) binding site. H246 lines the Zn(2+) pocket. Position 249 (E249) interacts with 4-imidazolone-5-propanoate. D320 contributes to the Fe(3+) binding site. Residue D320 coordinates Zn(2+). The N-formimidoyl-L-glutamate site is built by N322 and G324. T325 serves as a coordination point for 4-imidazolone-5-propanoate.

The protein belongs to the metallo-dependent hydrolases superfamily. HutI family. Requires Zn(2+) as cofactor. Fe(3+) serves as cofactor.

The protein localises to the cytoplasm. The enzyme catalyses 4-imidazolone-5-propanoate + H2O = N-formimidoyl-L-glutamate. The protein operates within amino-acid degradation; L-histidine degradation into L-glutamate; N-formimidoyl-L-glutamate from L-histidine: step 3/3. Catalyzes the hydrolytic cleavage of the carbon-nitrogen bond in imidazolone-5-propanoate to yield N-formimidoyl-L-glutamate. It is the third step in the universal histidine degradation pathway. This Caldanaerobacter subterraneus subsp. tengcongensis (strain DSM 15242 / JCM 11007 / NBRC 100824 / MB4) (Thermoanaerobacter tengcongensis) protein is Imidazolonepropionase.